The following is a 211-amino-acid chain: Transcription antitermination protein NusB (211 aa).

The interval 152 to 211 (PAKKERVANPFPSTPPKKPENVPNPFSTPFKKNSSEPIRNPFEGNKSPQPPQKTLRRKKK) is disordered. The segment covering 175–188 (NPFSTPFKKNSSEP) has biased composition (polar residues).

The protein belongs to the NusB family.

Its function is as follows. Involved in transcription antitermination. Required for transcription of ribosomal RNA (rRNA) genes. Binds specifically to the boxA antiterminator sequence of the ribosomal RNA (rrn) operons. The sequence is that of Transcription antitermination protein NusB from Chloroherpeton thalassium (strain ATCC 35110 / GB-78).